Reading from the N-terminus, the 498-residue chain is ATP synthase subunit beta, chloroplastic (498 aa).

An ATP-binding site is contributed by 172-179 (GGAGVGKT).

It belongs to the ATPase alpha/beta chains family. As to quaternary structure, F-type ATPases have 2 components, CF(1) - the catalytic core - and CF(0) - the membrane proton channel. CF(1) has five subunits: alpha(3), beta(3), gamma(1), delta(1), epsilon(1). CF(0) has four main subunits: a(1), b(1), b'(1) and c(9-12).

The protein localises to the plastid. It localises to the chloroplast thylakoid membrane. The enzyme catalyses ATP + H2O + 4 H(+)(in) = ADP + phosphate + 5 H(+)(out). Its function is as follows. Produces ATP from ADP in the presence of a proton gradient across the membrane. The catalytic sites are hosted primarily by the beta subunits. This chain is ATP synthase subunit beta, chloroplastic, found in Oenothera biennis (German evening primrose).